A 447-amino-acid chain; its full sequence is Tubulin beta-5 chain (447 aa).

GTP is bound by residues Gln11, Glu69, Ser138, Gly142, Thr143, Gly144, Asn204, and Asn226. Glu69 provides a ligand contact to Mg(2+). Positions 424–447 (QYQDATAEEEGEFDEDEELDDAMG) are disordered. The span at 429–447 (TAEEEGEFDEDEELDDAMG) shows a compositional bias: acidic residues.

The protein belongs to the tubulin family. In terms of assembly, dimer of alpha and beta chains. A typical microtubule is a hollow water-filled tube with an outer diameter of 25 nm and an inner diameter of 15 nM. Alpha-beta heterodimers associate head-to-tail to form protofilaments running lengthwise along the microtubule wall with the beta-tubulin subunit facing the microtubule plus end conferring a structural polarity. Microtubules usually have 13 protofilaments but different protofilament numbers can be found in some organisms and specialized cells. The cofactor is Mg(2+).

It is found in the cytoplasm. It localises to the cytoskeleton. Its function is as follows. Tubulin is the major constituent of microtubules, a cylinder consisting of laterally associated linear protofilaments composed of alpha- and beta-tubulin heterodimers. Microtubules grow by the addition of GTP-tubulin dimers to the microtubule end, where a stabilizing cap forms. Below the cap, tubulin dimers are in GDP-bound state, owing to GTPase activity of alpha-tubulin. This chain is Tubulin beta-5 chain (TUBB5), found in Ectocarpus variabilis (Brown alga).